A 208-amino-acid polypeptide reads, in one-letter code: FMN-dependent NADH:quinone oxidoreductase 4 (208 aa).

This sequence belongs to the azoreductase type 1 family. Homodimer. It depends on FMN as a cofactor.

It catalyses the reaction 2 a quinone + NADH + H(+) = 2 a 1,4-benzosemiquinone + NAD(+). The enzyme catalyses N,N-dimethyl-1,4-phenylenediamine + anthranilate + 2 NAD(+) = 2-(4-dimethylaminophenyl)diazenylbenzoate + 2 NADH + 2 H(+). Its function is as follows. Quinone reductase that provides resistance to thiol-specific stress caused by electrophilic quinones. In terms of biological role, also exhibits azoreductase activity. Catalyzes the reductive cleavage of the azo bond in aromatic azo compounds to the corresponding amines. This is FMN-dependent NADH:quinone oxidoreductase 4 from Bacillus cereus (strain ZK / E33L).